We begin with the raw amino-acid sequence, 307 residues long: Methionyl-tRNA formyltransferase (307 aa).

108–111 is a (6S)-5,6,7,8-tetrahydrofolate binding site; the sequence is SLLP.

This sequence belongs to the Fmt family.

The enzyme catalyses L-methionyl-tRNA(fMet) + (6R)-10-formyltetrahydrofolate = N-formyl-L-methionyl-tRNA(fMet) + (6S)-5,6,7,8-tetrahydrofolate + H(+). Attaches a formyl group to the free amino group of methionyl-tRNA(fMet). The formyl group appears to play a dual role in the initiator identity of N-formylmethionyl-tRNA by promoting its recognition by IF2 and preventing the misappropriation of this tRNA by the elongation apparatus. The polypeptide is Methionyl-tRNA formyltransferase (Xanthomonas oryzae pv. oryzae (strain MAFF 311018)).